The primary structure comprises 318 residues: Thymidylate synthase (318 aa).

DUMP contacts are provided by residues R25 and R180–R181. Residue C200 is the Nucleophile of the active site. DUMP contacts are provided by residues R220 to D223, N231, and H261 to Y263. D223 serves as a coordination point for (6R)-5,10-methylene-5,6,7,8-tetrahydrofolate. (6R)-5,10-methylene-5,6,7,8-tetrahydrofolate is bound at residue A317.

This sequence belongs to the thymidylate synthase family. Bacterial-type ThyA subfamily. As to quaternary structure, homodimer.

It is found in the cytoplasm. The enzyme catalyses dUMP + (6R)-5,10-methylene-5,6,7,8-tetrahydrofolate = 7,8-dihydrofolate + dTMP. It participates in pyrimidine metabolism; dTTP biosynthesis. Catalyzes the reductive methylation of 2'-deoxyuridine-5'-monophosphate (dUMP) to 2'-deoxythymidine-5'-monophosphate (dTMP) while utilizing 5,10-methylenetetrahydrofolate (mTHF) as the methyl donor and reductant in the reaction, yielding dihydrofolate (DHF) as a by-product. This enzymatic reaction provides an intracellular de novo source of dTMP, an essential precursor for DNA biosynthesis. The chain is Thymidylate synthase from Bacillus cereus (strain ATCC 14579 / DSM 31 / CCUG 7414 / JCM 2152 / NBRC 15305 / NCIMB 9373 / NCTC 2599 / NRRL B-3711).